The following is an 801-amino-acid chain: Bromodomain-containing protein 2 (801 aa).

Met-1 carries the N-acetylmethionine modification. Thr-6 carries the phosphothreonine modification. Ser-37 carries the phosphoserine modification. The tract at residues 53-73 (ALQLTPANPPPPEVSNPKKPG) is disordered. Residues 74 to 180 (RVTNQLQYLH…KIFLQKVASM (107 aa)) enclose the Bromo 1 domain. A protein contacts are provided by Asp-112, Tyr-155, Asn-156, Lys-157, Asp-160, and Asp-161. Disordered regions lie at residues 268-349 (PPAQ…LSEQ), 456-647 (EPLE…YDEK), and 737-801 (EKRL…SDSG). The span at 285 to 298 (TTTPTPTAILAPGS) shows a compositional bias: low complexity. Phosphoserine is present on residues Ser-298, Ser-301, and Ser-305. Positions 316–332 (MRRESGRPIKPPRKDLP) are enriched in basic and acidic residues. The region spanning 344–453 (GKLSEQLKHC…DVFEFRYAKM (110 aa)) is the Bromo 2 domain. Acidic residues predominate over residues 481-514 (SSEESSSESSSEEEEEEDEEDEEEEESESSDSEE). A compositionally biased stretch (basic residues) spans 544–566 (KPKRKREKKEKKKKRKAEKHRGR). The short motif at 555–559 (KKKRK) is the Nuclear localization signal element. Positions 592–612 (GSGGGSAALGPSGFGPSGGSG) are enriched in gly residues. One can recognise an NET domain in the interval 632–714 (DSEEEEESRP…SCLRKKPRKP (83 aa)). A Phosphoserine modification is found at Ser-633. Low complexity predominate over residues 763–795 (SSSAQQVAVSRLSASSSSSDSSSSSSSSSSSDT).

It belongs to the BET family. Homodimer. Interacts with E2F1. Interacts with (acetylated) STAT3; promoting STAT3 recruitment to chromatin. Interacts with CTCF; promoting BRD2 recruitment to chromatin. In terms of assembly, (Microbial infection) Interacts with herpes virus 8 protein LANA1.

It is found in the nucleus. It localises to the chromosome. Its activity is regulated as follows. Inhibited by JQ1, a thieno-triazolo-1,4-diazepine derivative, which specifically inhibits members of the BET family (BRD2, BRD3 and BRD4). The first bromo domain is inhibited by GSK778 (iBET-BD1), which specifically inhibits the first bromo domain of members of the BET family (BRD2, BRD3 and BRD4). The second bromo domain is inhibited by ABBV-744, which specifically inhibits the second bromo domain of members of the BET family (BRD2, BRD3 and BRD4). The second bromo domain is inhibited by GSK046 (iBET-BD2), which specifically inhibits the second bromo domain of members of the BET family (BRD2, BRD3 and BRD4). Its function is as follows. Chromatin reader protein that specifically recognizes and binds histone H4 acetylated at 'Lys-5' and 'Lys-12' (H4K5ac and H4K12ac, respectively), thereby controlling gene expression and remodeling chromatin structures. Recruits transcription factors and coactivators to target gene sites, and activates RNA polymerase II machinery for transcriptional elongation. Plays a key role in genome compartmentalization via its association with CTCF and cohesin: recruited to chromatin by CTCF and promotes formation of topologically associating domains (TADs) via its ability to bind acetylated histones, contributing to CTCF boundary formation and enhancer insulation. Also recognizes and binds acetylated non-histone proteins, such as STAT3. Involved in inflammatory response by regulating differentiation of naive CD4(+) T-cells into T-helper Th17: recognizes and binds STAT3 acetylated at 'Lys-87', promoting STAT3 recruitment to chromatin. In addition to acetylated lysines, also recognizes and binds lysine residues on histones that are both methylated and acetylated on the same side chain to form N6-acetyl-N6-methyllysine (Kacme), an epigenetic mark of active chromatin associated with increased transcriptional initiation. Specifically binds histone H4 acetyl-methylated at 'Lys-5' and 'Lys-12' (H4K5acme and H4K12acme, respectively). The protein is Bromodomain-containing protein 2 of Homo sapiens (Human).